Reading from the N-terminus, the 330-residue chain is Pre-mRNA-splicing factor 38 (330 aa).

Residues 182–330 (SVLDEDLDDE…SRGERDRRRY (149 aa)) form a disordered region. Over residues 184-199 (LDEDLDDELPSDEEKA) the composition is skewed to acidic residues. Basic residues predominate over residues 213–224 (RRPRRVRSKSRS). The segment covering 240–330 (RSRDYYDELE…SRGERDRRRY (91 aa)) has biased composition (basic and acidic residues).

It belongs to the PRP38 family. Component of the spliceosome C complex. Interacts with Mfap1 (via C-terminus). In terms of tissue distribution, detected in all germal and follicle cells.

The protein localises to the nucleus. Functionally, required for pre-mRNA splicing. This chain is Pre-mRNA-splicing factor 38, found in Drosophila melanogaster (Fruit fly).